The following is a 163-amino-acid chain: Lipoprotein signal peptidase (163 aa).

3 consecutive transmembrane segments (helical) span residues 11 to 31 (ILIA…IATT), 64 to 84 (MTFF…FFIN), and 88 to 108 (YNLF…GNFI). Catalysis depends on residues D118 and D136. The chain crosses the membrane as a helical span at residues 131 to 151 (IFNIADSSLTIGVILIIIALL).

The protein belongs to the peptidase A8 family.

The protein resides in the cell membrane. It catalyses the reaction Release of signal peptides from bacterial membrane prolipoproteins. Hydrolyzes -Xaa-Yaa-Zaa-|-(S,diacylglyceryl)Cys-, in which Xaa is hydrophobic (preferably Leu), and Yaa (Ala or Ser) and Zaa (Gly or Ala) have small, neutral side chains.. It functions in the pathway protein modification; lipoprotein biosynthesis (signal peptide cleavage). In terms of biological role, this protein specifically catalyzes the removal of signal peptides from prolipoproteins. The chain is Lipoprotein signal peptidase from Staphylococcus aureus (strain bovine RF122 / ET3-1).